The primary structure comprises 790 residues: Type VI secretion system spike protein VgrG5 (790 aa).

Basic and acidic residues-rich tracts occupy residues 753-763 (GFRDYRAEMPQ) and 772-790 (AYRRDASRPGAADKDEPTP). Residues 753–790 (GFRDYRAEMPQHKPRSAPDAYRRDASRPGAADKDEPTP) are disordered.

Belongs to the VgrG protein family.

The protein resides in the secreted. Part of the H2 type VI secretion system (H2-T6SS) specialized secretion system, which delivers several virulence factors in both prokaryotic and eukaryotic cells during infection. Allows the delivery of the phospholipase effector PldB to target cells where it exerts its toxicity. Also plays a role in VgrG4b and its effector PldA secretion. The sequence is that of Type VI secretion system spike protein VgrG5 from Pseudomonas aeruginosa (strain ATCC 15692 / DSM 22644 / CIP 104116 / JCM 14847 / LMG 12228 / 1C / PRS 101 / PAO1).